A 465-amino-acid polypeptide reads, in one-letter code: Putative subtilisin-like proteinase 1 (465 aa).

The signal sequence occupies residues 1-17 (MILAIISLSVVICREVS). An Inhibitor I9 domain is found at 19–90 (YIVMFDQDPS…VKMVVKDSPV (72 aa)). Positions 115–447 (PWGLARVGGS…PSLFNANKKK (333 aa)) constitute a Peptidase S8 domain. Catalysis depends on charge relay system residues D148 and H180. C329 and C360 are joined by a disulfide. S386 acts as the Charge relay system in catalysis.

It belongs to the peptidase S8 family.

The protein localises to the secreted. It localises to the extracellular space. In terms of biological role, may be involved in the degradation of proteins for nutrient acquisition or possess a regulatory function by proteolytic activation of proproteins. The protein is Putative subtilisin-like proteinase 1 (SPL1) of Encephalitozoon cuniculi (strain GB-M1) (Microsporidian parasite).